The sequence spans 968 residues: Probable histidine kinase 1 (968 aa).

Coiled coils occupy residues 89-120 (LLKE…FQDE) and 169-204 (KERA…QSHT). The region spanning 372–655 (TMSHEIRSPL…TFSFVLPCKI (284 aa)) is the Histidine kinase domain. The residue at position 375 (His375) is a Phosphohistidine; by autocatalysis. Residues 737 to 757 (STNSASTAHQSNGPSVSRTNK) are disordered. Positions 738–754 (TNSASTAHQSNGPSVSR) are enriched in polar residues. The 148-residue stretch at 818-965 (KILLVEDNKV…NIKECLQQYL (148 aa)) folds into the Response regulatory domain. At Asp867 the chain carries 4-aspartylphosphate.

Activation probably requires a transfer of a phosphate group between a His in the transmitter domain and an Asp of the receiver domain.

The enzyme catalyses ATP + protein L-histidine = ADP + protein N-phospho-L-histidine.. Its function is as follows. Cytokinin receptor related to bacterial two-component regulators. Functions as a histidine kinase and transmits the stress signal to a downstream MAPK cascade. This Oryza sativa subsp. indica (Rice) protein is Probable histidine kinase 1.